The primary structure comprises 1391 residues: DNA-directed RNA polymerase subunit beta'' (1391 aa).

Positions 220, 291, 298, and 301 each coordinate Zn(2+).

The protein belongs to the RNA polymerase beta' chain family. RpoC2 subfamily. As to quaternary structure, in plastids the minimal PEP RNA polymerase catalytic core is composed of four subunits: alpha, beta, beta', and beta''. When a (nuclear-encoded) sigma factor is associated with the core the holoenzyme is formed, which can initiate transcription. It depends on Zn(2+) as a cofactor.

Its subcellular location is the plastid. The protein localises to the chloroplast. The catalysed reaction is RNA(n) + a ribonucleoside 5'-triphosphate = RNA(n+1) + diphosphate. DNA-dependent RNA polymerase catalyzes the transcription of DNA into RNA using the four ribonucleoside triphosphates as substrates. The polypeptide is DNA-directed RNA polymerase subunit beta'' (Gossypium barbadense (Sea Island cotton)).